Consider the following 248-residue polypeptide: Neurovirulence factor ICP34.5 (248 aa).

A compositionally biased stretch (basic residues) spans 1–14 (MARRRRHRGPRRPR). The required for nucleolar localization stretch occupies residues 1 to 16 (MARRRRHRGPRRPRPP). Disordered stretches follow at residues 1–129 (MARR…FRLP) and 149–174 (RRAG…TPAT). Polar residues predominate over residues 24-35 (TAQSQVTSTPNS). A compositionally biased stretch (pro residues) spans 45-58 (AAPPPPPAGGPPPS). Over residues 73 to 83 (ASDDDDDDDWP) the composition is skewed to acidic residues. Pro residues-rich tracts occupy residues 84–93 (DSPPPEPAPE) and 119–128 (SHPPSRPFRL). Residues 128 to 137 (LPPRLALRLR) carry the Nuclear export signal motif. Tandem repeats lie at residues 161 to 163 (ATP), 164 to 166 (ATP), 167 to 169 (ATP), 170 to 172 (ATP), and 173 to 175 (ATP). The interval 161 to 175 (ATPATPATPATPATP) is 5 X 3 AA tandem repeats of A-T-P. Over residues 164 to 174 (ATPATPATPAT) the composition is skewed to low complexity. The tract at residues 175 to 188 (PARVRFSPHVRVRH) is binding to PP1CA. An interaction with host PPP1CA region spans residues 175-188 (PARVRFSPHVRVRH). The important for interferon resistance stretch occupies residues 190 to 248 (VVWASAARLARRGSWARERADRARFRRRVAEAEAVIGPCLGPEARARALARGAGPANSV). The short motif at 200-218 (RRGSWARERADRARFRRRV) is the Bipartite nuclear localization signal element. Positions 218-233 (VAEAEAVIGPCLGPEA) are interaction with host EIF2S1/EIF-2ALPHA.

The protein belongs to the PPP1R15 family. As to quaternary structure, interacts with host PPP1CA; this interaction forms a high-molecular-weight complex that dephosphorylates EIF2S1/eIF-2alpha. Interacts with host EIF2S1/eIF-2alpha; this interaction is crucial for the specific dephosphorylation of EIF2S1/eIF-2alpha by PPP1CA. Binds to proliferating cell nuclear antigen (PCNA), which may release host cells from growth arrest and facilitate viral replication. Interacts (via N-terminus) with host C1QBP; this interaction allows C1QBP to be recruited to the inner nuclear membrane by ICP34.5. Interacts with host PRKCA. Interacts with protein UL31. Interacts with host STING/TMEM173; this interaction inhibits the intracellular DNA sensing pathway. Interacts with host BECN1; this interaction modulates host autophagy.

The protein localises to the host cytoplasm. The protein resides in the host nucleus. It localises to the host nucleolus. Its subcellular location is the virion. Inhibits the establishment of the immune response and of the integrated stress response (ISR) in the infected cell. Plays essential roles in viral nuclear egress to mediate capsid transit across the nuclear membrane. Facilitates nuclear egress cooperatively with host C1QBP and protein kinase C/PKC to induce lamin A/C phosphorylation and subsequent reorganization. In turn, lamina disassembles and nuclear egress occurs. Recruits the serine/threonine protein phosphatase PPP1CA/PP1-alpha to dephosphorylate the translation initiation factor EIF2S1/eIF-2alpha, thereby couteracting the host shutoff of protein synthesis involving double-stranded RNA-dependent protein kinase EIF2AK2/PKR. In turn, controls host IRF3 activation and subsequently inhibits host interferon response. Controls the DNA sensing pathway by interacting with and inhibiting host STING/TMEM173. Also down-modulates the host MHC class II proteins cell surface expression. Acts as a neurovirulence factor that has a profound effect on the growth of the virus in central nervous system tissue, by interacting with host BECN1 and thereby antagonizing the host autophagy response. The polypeptide is Neurovirulence factor ICP34.5 (ICP34.5) (Homo sapiens (Human)).